A 491-amino-acid chain; its full sequence is Conidiogenone synthase PchP450 (491 aa).

The helical transmembrane segment at 2-22 (LLLWFGFFSFVCGLVIYRLQF) threads the bilayer. Cys-430 lines the heme pocket.

This sequence belongs to the cytochrome P450 family. Heme is required as a cofactor.

It localises to the membrane. The protein operates within secondary metabolite biosynthesis; terpenoid biosynthesis. Its function is as follows. Cytochrome P450 monooxygenase; part of the gene cluster that mediates the biosynthesis of conidiogenone, a diterpene known to induce the conidiation. The bifunctional terpene synthase PrDS converts isopentenyl diphosphate (IPP) and dimethylallyl diphosphate (DMAPP) into deoxyconidiogenol. The C-terminal prenyltransferase (PT) domain of PrDS catalyzes formation of GGPP, whereas the N-terminal terpene cyclase (TC) domain catalyzes the cyclization of GGPP into deoxyconidiogenol. The cytochrome P450 monooxygenase PrP450 then catalyzes two rounds of oxidation to furnish conidiogenone. In Penicillium rubens (strain ATCC 28089 / DSM 1075 / NRRL 1951 / Wisconsin 54-1255) (Penicillium chrysogenum), this protein is Conidiogenone synthase PchP450.